Consider the following 115-residue polypeptide: MPKSTNSVASKARRKRILKKAKGYWGSRGNVLTVVKHAVDKAEQYAYRDRRVKKRNFRSLWIMRINAAARQNGVSYSRLMDAIHKKNIEIDRKALAEIAVKDPAAFSLIVKTALD.

Belongs to the bacterial ribosomal protein bL20 family.

Functionally, binds directly to 23S ribosomal RNA and is necessary for the in vitro assembly process of the 50S ribosomal subunit. It is not involved in the protein synthesizing functions of that subunit. The protein is Large ribosomal subunit protein bL20 of Chlorobaculum tepidum (strain ATCC 49652 / DSM 12025 / NBRC 103806 / TLS) (Chlorobium tepidum).